The chain runs to 1169 residues: Translation initiation factor IF-2 (1169 aa).

Disordered regions lie at residues 69–108 and 139–568; these read IKAK…PLLI and ALSK…LRAA. 2 stretches are compositionally biased toward basic and acidic residues: residues 71–83 and 92–102; these read AKNE…DNKN and HPEKLSKEGLN. Residues 139 to 156 are compositionally biased toward polar residues; the sequence is ALSKNQNKTNTSVITTPN. The segment covering 157 to 171 has biased composition (basic and acidic residues); that stretch reads LKDKKNPSALQDKKP. A compositionally biased stretch (low complexity) spans 196-214; the sequence is NLANSNRNINANKINNSVN. The span at 231–248 shows a compositional bias: polar residues; the sequence is ADNNNFPKKNLNSPNVKS. Residues 265-281 are compositionally biased toward low complexity; it reads NTNRPNSNSRQPSSNTQ. Composition is skewed to polar residues over residues 282–294, 412–432, and 439–455; these read ISAN…NRQG, MQLQ…NVNK, and NQKT…SPSP. The span at 472 to 486 shows a compositional bias: basic and acidic residues; that stretch reads GRTDWDDSAKLEALR. The span at 544 to 560 shows a compositional bias: basic residues; the sequence is KQFKKKKKETTRQRQKR. Positions 661–838 constitute a tr-type G domain; that stretch reads KRPPVITVMG…EVEDLQANPE (178 aa). A G1 region spans residues 670 to 677; it reads GHVDHGKT. 670–677 provides a ligand contact to GTP; sequence GHVDHGKT. The segment at 695 to 699 is G2; sequence GITQH. A G3 region spans residues 720 to 723; it reads DTPG. GTP-binding positions include 720-724 and 774-777; these read DTPGH and NKID. Residues 774-777 are G4; sequence NKID. The segment at 810 to 812 is G5; sequence SAI.

It belongs to the TRAFAC class translation factor GTPase superfamily. Classic translation factor GTPase family. IF-2 subfamily.

The protein resides in the cytoplasm. Functionally, one of the essential components for the initiation of protein synthesis. Protects formylmethionyl-tRNA from spontaneous hydrolysis and promotes its binding to the 30S ribosomal subunits. Also involved in the hydrolysis of GTP during the formation of the 70S ribosomal complex. The chain is Translation initiation factor IF-2 from Prochlorococcus marinus subsp. pastoris (strain CCMP1986 / NIES-2087 / MED4).